The following is a 164-amino-acid chain: ATP synthase subunit b (164 aa).

Residues 6–26 (GELVGNFILVTGSVIVLLLLI) form a helical membrane-spanning segment.

This sequence belongs to the ATPase B chain family. F-type ATPases have 2 components, F(1) - the catalytic core - and F(0) - the membrane proton channel. F(1) has five subunits: alpha(3), beta(3), gamma(1), delta(1), epsilon(1). F(0) has three main subunits: a(1), b(2) and c(10-14). The alpha and beta chains form an alternating ring which encloses part of the gamma chain. F(1) is attached to F(0) by a central stalk formed by the gamma and epsilon chains, while a peripheral stalk is formed by the delta and b chains.

It localises to the cell membrane. Functionally, f(1)F(0) ATP synthase produces ATP from ADP in the presence of a proton or sodium gradient. F-type ATPases consist of two structural domains, F(1) containing the extramembraneous catalytic core and F(0) containing the membrane proton channel, linked together by a central stalk and a peripheral stalk. During catalysis, ATP synthesis in the catalytic domain of F(1) is coupled via a rotary mechanism of the central stalk subunits to proton translocation. Component of the F(0) channel, it forms part of the peripheral stalk, linking F(1) to F(0). The sequence is that of ATP synthase subunit b from Streptococcus pyogenes serotype M6 (strain ATCC BAA-946 / MGAS10394).